The primary structure comprises 50 residues: Protein hunchback (50 aa).

3 consecutive C2H2-type zinc fingers follow at residues H1–H5, F11–H33, and Y39–Y50.

The protein belongs to the hunchback C2H2-type zinc-finger protein family.

The protein resides in the nucleus. In terms of biological role, gap class segmentation protein that controls development of head structures. The protein is Protein hunchback (hb) of Schultesia lampyridiformis (Firefly mimic roach).